A 119-amino-acid chain; its full sequence is MPRVKRGVTARARHKKVLDQAKGYRGRRKNVYRIAKQAVMKAGQYAYRDRRQRKRQFRALWIARINAAARELGLTYSTFMNGLKKAAVEVDRKVLADLAVFDKPAFAALAEQARAKLAA.

Belongs to the bacterial ribosomal protein bL20 family.

Its function is as follows. Binds directly to 23S ribosomal RNA and is necessary for the in vitro assembly process of the 50S ribosomal subunit. It is not involved in the protein synthesizing functions of that subunit. In Azoarcus sp. (strain BH72), this protein is Large ribosomal subunit protein bL20.